The chain runs to 221 residues: MKPVHAFMRLYFIAGTQDCLHLDGDPAQNLLNILQQALQSGITCYQFREKGKKALQDPDKIKALAIQCRDLCRQYQVPFVVNDDVQLAIDIGADGIHVGQTDMAVADVAALCHSHCFIGTSVNTLEQGIAAQANPLIDYFGTGPIFPTQSKEDPKPVVGVDFVSTIRAHGIDKPIVAIGGVTTQTAEELRRRGANGVAVISAITQSADIAKTVKELLGNAQ.

4-amino-2-methyl-5-(diphosphooxymethyl)pyrimidine is bound by residues 46 to 50 (QFREK) and asparagine 82. Mg(2+) is bound by residues aspartate 83 and aspartate 102. Serine 121 contributes to the 4-amino-2-methyl-5-(diphosphooxymethyl)pyrimidine binding site. A 2-[(2R,5Z)-2-carboxy-4-methylthiazol-5(2H)-ylidene]ethyl phosphate-binding site is contributed by 148–150 (TQS). Lysine 151 lines the 4-amino-2-methyl-5-(diphosphooxymethyl)pyrimidine pocket. 2-[(2R,5Z)-2-carboxy-4-methylthiazol-5(2H)-ylidene]ethyl phosphate-binding positions include glycine 180 and 200–201 (IS).

This sequence belongs to the thiamine-phosphate synthase family. Mg(2+) is required as a cofactor.

The enzyme catalyses 2-[(2R,5Z)-2-carboxy-4-methylthiazol-5(2H)-ylidene]ethyl phosphate + 4-amino-2-methyl-5-(diphosphooxymethyl)pyrimidine + 2 H(+) = thiamine phosphate + CO2 + diphosphate. It catalyses the reaction 2-(2-carboxy-4-methylthiazol-5-yl)ethyl phosphate + 4-amino-2-methyl-5-(diphosphooxymethyl)pyrimidine + 2 H(+) = thiamine phosphate + CO2 + diphosphate. It carries out the reaction 4-methyl-5-(2-phosphooxyethyl)-thiazole + 4-amino-2-methyl-5-(diphosphooxymethyl)pyrimidine + H(+) = thiamine phosphate + diphosphate. The protein operates within cofactor biosynthesis; thiamine diphosphate biosynthesis; thiamine phosphate from 4-amino-2-methyl-5-diphosphomethylpyrimidine and 4-methyl-5-(2-phosphoethyl)-thiazole: step 1/1. Functionally, condenses 4-methyl-5-(beta-hydroxyethyl)thiazole monophosphate (THZ-P) and 2-methyl-4-amino-5-hydroxymethyl pyrimidine pyrophosphate (HMP-PP) to form thiamine monophosphate (TMP). This is Thiamine-phosphate synthase from Pasteurella multocida (strain Pm70).